A 396-amino-acid polypeptide reads, in one-letter code: Tryptophan synthase beta chain (396 aa).

Position 88 is an N6-(pyridoxal phosphate)lysine (K88).

Belongs to the TrpB family. Tetramer of two alpha and two beta chains. It depends on pyridoxal 5'-phosphate as a cofactor.

The enzyme catalyses (1S,2R)-1-C-(indol-3-yl)glycerol 3-phosphate + L-serine = D-glyceraldehyde 3-phosphate + L-tryptophan + H2O. Its pathway is amino-acid biosynthesis; L-tryptophan biosynthesis; L-tryptophan from chorismate: step 5/5. In terms of biological role, the beta subunit is responsible for the synthesis of L-tryptophan from indole and L-serine. The polypeptide is Tryptophan synthase beta chain (Shewanella sp. (strain W3-18-1)).